A 469-amino-acid chain; its full sequence is Trigger factor (469 aa).

The PPIase FKBP-type domain occupies G162–P243. Residues N429–E469 form a disordered region. Positions F437–E452 are enriched in basic and acidic residues. The span at A453 to E469 shows a compositional bias: acidic residues.

The protein belongs to the FKBP-type PPIase family. Tig subfamily.

The protein resides in the cytoplasm. The enzyme catalyses [protein]-peptidylproline (omega=180) = [protein]-peptidylproline (omega=0). Its function is as follows. Involved in protein export. Acts as a chaperone by maintaining the newly synthesized protein in an open conformation. Functions as a peptidyl-prolyl cis-trans isomerase. The polypeptide is Trigger factor (Mycobacterium leprae (strain Br4923)).